A 242-amino-acid chain; its full sequence is Glucosamine-6-phosphate deaminase (242 aa).

The Proton acceptor; for enolization step role is filled by D71. The active-site For ring-opening step is N142. H144 acts as the Proton acceptor; for ring-opening step in catalysis. Catalysis depends on E149, which acts as the For ring-opening step.

It belongs to the glucosamine/galactosamine-6-phosphate isomerase family. NagB subfamily.

The catalysed reaction is alpha-D-glucosamine 6-phosphate + H2O = beta-D-fructose 6-phosphate + NH4(+). It participates in amino-sugar metabolism; N-acetylneuraminate degradation; D-fructose 6-phosphate from N-acetylneuraminate: step 5/5. Catalyzes the reversible isomerization-deamination of glucosamine 6-phosphate (GlcN6P) to form fructose 6-phosphate (Fru6P) and ammonium ion. The protein is Glucosamine-6-phosphate deaminase of Malacoplasma penetrans (strain HF-2) (Mycoplasma penetrans).